Consider the following 250-residue polypeptide: Ribonuclease PH (250 aa).

Phosphate-binding positions include Arg86 and 124–126 (GTR).

Belongs to the RNase PH family. Homohexameric ring arranged as a trimer of dimers.

The enzyme catalyses tRNA(n+1) + phosphate = tRNA(n) + a ribonucleoside 5'-diphosphate. Its function is as follows. Phosphorolytic 3'-5' exoribonuclease that plays an important role in tRNA 3'-end maturation. Removes nucleotide residues following the 3'-CCA terminus of tRNAs; can also add nucleotides to the ends of RNA molecules by using nucleoside diphosphates as substrates, but this may not be physiologically important. Probably plays a role in initiation of 16S rRNA degradation (leading to ribosome degradation) during starvation. In Exiguobacterium sibiricum (strain DSM 17290 / CCUG 55495 / CIP 109462 / JCM 13490 / 255-15), this protein is Ribonuclease PH.